The chain runs to 110 residues: Iron-sulfur cluster insertion protein ErpA (110 aa).

Iron-sulfur cluster is bound by residues cysteine 38, cysteine 102, and cysteine 104.

Belongs to the HesB/IscA family. In terms of assembly, homodimer. The cofactor is iron-sulfur cluster.

Required for insertion of 4Fe-4S clusters for at least IspG. This chain is Iron-sulfur cluster insertion protein ErpA, found in Marinobacter nauticus (strain ATCC 700491 / DSM 11845 / VT8) (Marinobacter aquaeolei).